A 288-amino-acid chain; its full sequence is NADPH-dependent aldehyde reductase 1, chloroplastic (288 aa).

Residues 1 to 18 (MASEKQKQHAQPGKEHVM) show a composition bias toward basic and acidic residues. The interval 1 to 32 (MASEKQKQHAQPGKEHVMESSPQFSSSDYQPS) is disordered. A compositionally biased stretch (polar residues) spans 20-32 (SSPQFSSSDYQPS). NADP(+) is bound at residue 47–71 (SGIGRAVGYCFASEGATVAFTYVKG). Ser-179 serves as a coordination point for substrate. The active-site Proton acceptor is Tyr-192.

The protein belongs to the short-chain dehydrogenases/reductases (SDR) family.

It localises to the plastid. Its subcellular location is the chloroplast. Its function is as follows. Aldehyde reductase that catalyzes the reduction of the aldehyde carbonyl groups on saturated and alpha,beta-unsaturated aldehydes with more than 5 carbons. No activity on alpha,beta-unsaturated ketones. Can use propionaldehyde, butyraldehyde, methylglyoxal, (e)-2-pentenal, (E)-2-hexenal, (Z)-3-hexenal and (E)-2-nonenal as substrates, but not propenal (acrolein), crotonaldehyde, 2-butanone, 3-buten-2-one or 1-penten-3-one. May act as a short alcohol-polyol-sugar dehydrogenase possibly related to carbohydrate metabolism and the acquisition of desiccation tolerance. May also be involved in signal transduction. The chain is NADPH-dependent aldehyde reductase 1, chloroplastic from Arabidopsis thaliana (Mouse-ear cress).